The primary structure comprises 241 residues: DNA repair protein RecO (241 aa).

Belongs to the RecO family.

Functionally, involved in DNA repair and RecF pathway recombination. This chain is DNA repair protein RecO, found in Roseobacter denitrificans (strain ATCC 33942 / OCh 114) (Erythrobacter sp. (strain OCh 114)).